The primary structure comprises 171 residues: uncharacterized protein (171 aa).

The N-terminal stretch at 1 to 20 (MRDFYLFLGAVFLLVLGVWA) is a signal peptide.

This is an uncharacterized protein from Aquifex aeolicus (strain VF5).